We begin with the raw amino-acid sequence, 360 residues long: NAD(P)H-quinone oxidoreductase subunit 1, chloroplastic (360 aa).

Transmembrane regions (helical) follow at residues 27–47 (IWIF…VLVI), 98–118 (FSIG…VIPF), 129–149 (IGIF…LMSG), 165–185 (AAQS…ISLL), 203–223 (FWGW…ISSL), 253–273 (FGLF…FVTV), 297–317 (IFGT…FLFV), and 340–360 (FLLP…LFSL).

It belongs to the complex I subunit 1 family. As to quaternary structure, NDH is composed of at least 16 different subunits, 5 of which are encoded in the nucleus.

The protein resides in the plastid. The protein localises to the chloroplast thylakoid membrane. The catalysed reaction is a plastoquinone + NADH + (n+1) H(+)(in) = a plastoquinol + NAD(+) + n H(+)(out). The enzyme catalyses a plastoquinone + NADPH + (n+1) H(+)(in) = a plastoquinol + NADP(+) + n H(+)(out). Its function is as follows. NDH shuttles electrons from NAD(P)H:plastoquinone, via FMN and iron-sulfur (Fe-S) centers, to quinones in the photosynthetic chain and possibly in a chloroplast respiratory chain. The immediate electron acceptor for the enzyme in this species is believed to be plastoquinone. Couples the redox reaction to proton translocation, and thus conserves the redox energy in a proton gradient. This is NAD(P)H-quinone oxidoreductase subunit 1, chloroplastic from Arabidopsis thaliana (Mouse-ear cress).